Reading from the N-terminus, the 298-residue chain is Probable endonuclease 4 (298 aa).

Residues H69, H111, E146, D180, H183, H215, D228, H230, and E260 each contribute to the Zn(2+) site.

Belongs to the AP endonuclease 2 family. It depends on Zn(2+) as a cofactor.

It catalyses the reaction Endonucleolytic cleavage to 5'-phosphooligonucleotide end-products.. Functionally, endonuclease IV plays a role in DNA repair. It cleaves phosphodiester bonds at apurinic or apyrimidinic (AP) sites, generating a 3'-hydroxyl group and a 5'-terminal sugar phosphate. The polypeptide is Probable endonuclease 4 (Bacillus cereus (strain AH187)).